Consider the following 219-residue polypeptide: Redox-sensing transcriptional repressor Rex (219 aa).

Positions 17–56 (RYLRYVEDLLNHDIMRISSSELSQRMGYTASQVRQDFNNF) form a DNA-binding region, H-T-H motif. NAD(+) is bound at residue 91–96 (GVGNLG).

This sequence belongs to the transcriptional regulatory Rex family. In terms of assembly, homodimer.

The protein resides in the cytoplasm. Its function is as follows. Modulates transcription in response to changes in cellular NADH/NAD(+) redox state. The sequence is that of Redox-sensing transcriptional repressor Rex from Caldicellulosiruptor saccharolyticus (strain ATCC 43494 / DSM 8903 / Tp8T 6331).